Here is a 374-residue protein sequence, read N- to C-terminus: Alanine racemase (374 aa).

The active-site Proton acceptor; specific for D-alanine is the Lys-44. An N6-(pyridoxal phosphate)lysine modification is found at Lys-44. Arg-139 contacts substrate. The active-site Proton acceptor; specific for L-alanine is Tyr-269. Met-317 contacts substrate.

It belongs to the alanine racemase family. Requires pyridoxal 5'-phosphate as cofactor.

It carries out the reaction L-alanine = D-alanine. It participates in amino-acid biosynthesis; D-alanine biosynthesis; D-alanine from L-alanine: step 1/1. In terms of biological role, catalyzes the interconversion of L-alanine and D-alanine. May also act on other amino acids. The polypeptide is Alanine racemase (alr) (Bordetella avium (strain 197N)).